We begin with the raw amino-acid sequence, 413 residues long: Tyrosine--tRNA ligase 2 (413 aa).

Residues 58–67 carry the 'HIGH' region motif; that stretch reads PSAPDVHLGH. Repeat copies occupy residues 89 to 94 and 96 to 101. A 2 X 6 AA tandem repeats region spans residues 89-101; it reads GDFTGKIGDPTGK. The 'KMSKS' region signature appears at 242-246; the sequence is KMSKS. Residue K245 coordinates ATP. Residues 353–413 enclose the S4 RNA-binding domain; sequence IAMIDLLVKL…VGKRKFLKLQ (61 aa).

The protein belongs to the class-I aminoacyl-tRNA synthetase family. TyrS type 2 subfamily. As to quaternary structure, homodimer.

It is found in the cytoplasm. It carries out the reaction tRNA(Tyr) + L-tyrosine + ATP = L-tyrosyl-tRNA(Tyr) + AMP + diphosphate + H(+). Functionally, catalyzes the attachment of tyrosine to tRNA(Tyr) in a two-step reaction: tyrosine is first activated by ATP to form Tyr-AMP and then transferred to the acceptor end of tRNA(Tyr). This Bacillus subtilis (strain 168) protein is Tyrosine--tRNA ligase 2.